Here is a 350-residue protein sequence, read N- to C-terminus: Protein RecA (350 aa).

67-74 (GPESSGKT) is an ATP binding site.

This sequence belongs to the RecA family.

Its subcellular location is the cytoplasm. Functionally, can catalyze the hydrolysis of ATP in the presence of single-stranded DNA, the ATP-dependent uptake of single-stranded DNA by duplex DNA, and the ATP-dependent hybridization of homologous single-stranded DNAs. It interacts with LexA causing its activation and leading to its autocatalytic cleavage. The protein is Protein RecA of Baumannia cicadellinicola subsp. Homalodisca coagulata.